Reading from the N-terminus, the 158-residue chain is Cytochrome c-type biogenesis protein CcmE (158 aa).

Residues 1–11 (MTRPDSGSSPA) are compositionally biased toward polar residues. A disordered region spans residues 1-20 (MTRPDSGSSPAPLSEARRRK). The Cytoplasmic segment spans residues 1-23 (MTRPDSGSSPAPLSEARRRKRNP). Residues 24–44 (LPTVLGITALLGLAGFIAFGN) form a helical; Signal-anchor for type II membrane protein membrane-spanning segment. Residues 45–158 (LNKSLEYFVT…ELRDLLEQSE (114 aa)) are Extracellular-facing. Heme is bound by residues His-137 and Tyr-141.

Belongs to the CcmE/CycJ family.

The protein localises to the cell membrane. Heme chaperone required for the biogenesis of c-type cytochromes. Transiently binds heme delivered by CcmC and transfers the heme to apo-cytochromes in a process facilitated by CcmF and CcmH. This chain is Cytochrome c-type biogenesis protein CcmE, found in Deinococcus deserti (strain DSM 17065 / CIP 109153 / LMG 22923 / VCD115).